Here is a 276-residue protein sequence, read N- to C-terminus: 4-hydroxy-tetrahydrodipicolinate reductase (276 aa).

NAD(+)-binding positions include Gly-18–Met-23 and Asp-44. Arg-45 provides a ligand contact to NADP(+). Residues Gly-107–Thr-109 and Ala-131–Met-134 each bind NAD(+). The Proton donor/acceptor role is filled by His-164. A (S)-2,3,4,5-tetrahydrodipicolinate-binding site is contributed by His-165. Lys-168 functions as the Proton donor in the catalytic mechanism. Residue Gly-174–Thr-175 coordinates (S)-2,3,4,5-tetrahydrodipicolinate.

Belongs to the DapB family.

Its subcellular location is the cytoplasm. The enzyme catalyses (S)-2,3,4,5-tetrahydrodipicolinate + NAD(+) + H2O = (2S,4S)-4-hydroxy-2,3,4,5-tetrahydrodipicolinate + NADH + H(+). It catalyses the reaction (S)-2,3,4,5-tetrahydrodipicolinate + NADP(+) + H2O = (2S,4S)-4-hydroxy-2,3,4,5-tetrahydrodipicolinate + NADPH + H(+). It functions in the pathway amino-acid biosynthesis; L-lysine biosynthesis via DAP pathway; (S)-tetrahydrodipicolinate from L-aspartate: step 4/4. In terms of biological role, catalyzes the conversion of 4-hydroxy-tetrahydrodipicolinate (HTPA) to tetrahydrodipicolinate. In Aromatoleum aromaticum (strain DSM 19018 / LMG 30748 / EbN1) (Azoarcus sp. (strain EbN1)), this protein is 4-hydroxy-tetrahydrodipicolinate reductase.